A 72-amino-acid chain; its full sequence is Disintegrin crotatroxin (72 aa).

The Disintegrin domain occupies 1–72 (AGEECDCGSP…ADCPRNGLYG (72 aa)). Intrachain disulfides connect cysteine 5/cysteine 20, cysteine 7/cysteine 15, cysteine 14/cysteine 37, cysteine 28/cysteine 34, cysteine 33/cysteine 58, and cysteine 46/cysteine 65. The Cell attachment site motif lies at 50–52 (RGD).

Belongs to the venom metalloproteinase (M12B) family. P-II subfamily. P-IIa sub-subfamily. In terms of assembly, monomer. In terms of tissue distribution, expressed by the venom gland.

Its subcellular location is the secreted. In terms of biological role, inhibits fibrinogen interaction with platelets. Acts by binding to the alpha-IIb/beta-3 (ITGA2B/ITGB3) on the platelet surface and inhibits aggregation induced by ADP, thrombin, platelet-activating factor and collagen. Inhibits ADP-induced platelet aggregation (IC(50) = 17.5nM), cancer cell migration in vitro, and experimental lung tumor colonization of cancer cells. The sequence is that of Disintegrin crotatroxin from Crotalus atrox (Western diamondback rattlesnake).